The sequence spans 359 residues: MTLNSSTEDGIKRIQDDCPKAGRHNYIFVMIPTLYSIIFVVGIFGNSLVVIVIYFYMKLKTVASVFLLNLALADLCFLLTLPLWAVYTAMEYRWPFGNHLCKIASASVSFNLYASVFLLTCLSIDRYLAIVHPMKSRLRRTMLVAKVTCIIIWLMAGLASLPAVIYRNVYFIENTNITVCAFHYESQNSTLPIGLGLTKNILGFVFPFLIILTSYTLIWKALKKAYKIQKNTPRNDDIFRIIMAIVLFFFFSWVPHQIFTFLDVLIQLGIIRDCEIADIVDTAMPITICIAYFNNCLNPLFYGFLGKKFKKYFLQLLKYIPPTAKSHAGLSTKMSTLSYRPSDNMSSSAKKSASFFEVE.

Topologically, residues 1 to 25 (MTLNSSTEDGIKRIQDDCPKAGRHN) are extracellular. The N-linked (GlcNAc...) asparagine glycan is linked to asparagine 4. Angiotensin II contacts are provided by glutamine 15 and aspartate 17. Cystine bridges form between cysteine 18–cysteine 274 and cysteine 101–cysteine 180. The chain crosses the membrane as a helical span at residues 26–55 (YIFVMIPTLYSIIFVVGIFGNSLVVIVIYF). The Cytoplasmic portion of the chain corresponds to 56–61 (YMKLKT). The helical transmembrane segment at 62 to 89 (VASVFLLNLALADLCFLLTLPLWAVYTA) threads the bilayer. The Extracellular portion of the chain corresponds to 90-98 (MEYRWPFGN). The helical transmembrane segment at 99–125 (HLCKIASASVSFNLYASVFLLTCLSID) threads the bilayer. Topologically, residues 126 to 141 (RYLAIVHPMKSRLRRT) are cytoplasmic. The chain crosses the membrane as a helical span at residues 142–165 (MLVAKVTCIIIWLMAGLASLPAVI). The Extracellular segment spans residues 166–190 (YRNVYFIENTNITVCAFHYESQNST). Arginine 167 contacts angiotensin II. An N-linked (GlcNAc...) asparagine glycan is attached at asparagine 176. 3 residues coordinate angiotensin II: phenylalanine 182, histidine 183, and tyrosine 184. Asparagine 188 carries N-linked (GlcNAc...) asparagine glycosylation. Residues 191-216 (LPIGLGLTKNILGFVFPFLIILTSYT) traverse the membrane as a helical segment. Angiotensin II is bound at residue lysine 199. At 217-239 (LIWKALKKAYKIQKNTPRNDDIF) the chain is on the cytoplasmic side. Residues 240 to 268 (RIIMAIVLFFFFSWVPHQIFTFLDVLIQL) traverse the membrane as a helical segment. Over 269-278 (GIIRDCEIAD) the chain is Extracellular. A helical transmembrane segment spans residues 279-304 (IVDTAMPITICIAYFNNCLNPLFYGF). The Cytoplasmic portion of the chain corresponds to 305-359 (LGKKFKKYFLQLLKYIPPTAKSHAGLSTKMSTLSYRPSDNMSSSAKKSASFFEVE). Residues 339 to 359 (YRPSDNMSSSAKKSASFFEVE) form a disordered region. Positions 346–359 (SSSAKKSASFFEVE) are enriched in low complexity.

This sequence belongs to the G-protein coupled receptor 1 family. As to quaternary structure, interacts with MAS1. Interacts with ARRB1. Interacts with FLNA (via filamin repeat 21); increases PKA-mediated phosphorylation of FLNA. Post-translationally, C-terminal Ser or Thr residues may be phosphorylated. Is expressed in the liver, kidney, aorta, lung, uterus, ovary, spleen, heart, and vascular smooth muscle cell. Expressed most abundantly in the adrenal gland.

It is found in the cell membrane. Its function is as follows. Receptor for angiotensin II, a vasoconstricting peptide, which acts as a key regulator of blood pressure and sodium retention by the kidney. The activated receptor in turn couples to G-alpha proteins G(q) (GNAQ, GNA11, GNA14 or GNA15) and thus activates phospholipase C and increases the cytosolic Ca(2+) concentrations, which in turn triggers cellular responses such as stimulation of protein kinase C. In Rattus norvegicus (Rat), this protein is Type-1 angiotensin II receptor B (Agtr1b).